We begin with the raw amino-acid sequence, 293 residues long: Xylanase inhibitor protein XIP (293 aa).

The first 21 residues, Met-1 to Ala-21, serve as a signal peptide directing secretion. The GH18 domain maps to Gly-31–Leu-293. 2 cysteine pairs are disulfide-bonded: Cys-50–Cys-92 and Cys-189–Cys-218.

Belongs to the glycosyl hydrolase 18 family. Xylanase inhibitor subfamily. As to expression, expressed in mature grain.

Its subcellular location is the secreted. In terms of biological role, fungal xylanase inhibitor. Possesses competitive inhibiting activity against several fungal endo-1,4-beta-D-xylanases belonging to glycoside hydrolase family 10 (GH10) and family 11 (GH11). May function in plant defense against secreted fungal pathogen xylanases. Is similar to class III chitinases, but does not exhibit chitinase activity. The protein is Xylanase inhibitor protein XIP of Oryza sativa subsp. japonica (Rice).